Consider the following 335-residue polypeptide: Probable nicotianamine synthase 3 (335 aa).

It belongs to the nicotianamine synthase (NAS)-like family.

It carries out the reaction 3 S-adenosyl-L-methionine = nicotianamine + 3 S-methyl-5'-thioadenosine + 3 H(+). Functionally, synthesizes nicotianamine, a polyamine that is the first intermediate in the synthesis of the phytosiderophores of the mugineic acid type found in gramineae which serves as a sensor for the physiological iron status within the plant, and/or might be involved in the transport of iron. The sequence is that of Probable nicotianamine synthase 3 (NAS3) from Hordeum vulgare (Barley).